The chain runs to 235 residues: Sugar fermentation stimulation protein homolog (235 aa).

Belongs to the SfsA family.

This Photorhabdus laumondii subsp. laumondii (strain DSM 15139 / CIP 105565 / TT01) (Photorhabdus luminescens subsp. laumondii) protein is Sugar fermentation stimulation protein homolog.